The sequence spans 78 residues: Translation initiation factor IF-1, chloroplastic (78 aa).

Residues 1 to 72 (MEKQNLIDME…TKGRITYRLR (72 aa)) enclose the S1-like domain.

This sequence belongs to the IF-1 family. In terms of assembly, component of the 30S ribosomal translation pre-initiation complex which assembles on the 30S ribosome in the order IF-2 and IF-3, IF-1 and N-formylmethionyl-tRNA(fMet); mRNA recruitment can occur at any time during PIC assembly.

Its subcellular location is the plastid. It is found in the chloroplast. One of the essential components for the initiation of protein synthesis. Stabilizes the binding of IF-2 and IF-3 on the 30S subunit to which N-formylmethionyl-tRNA(fMet) subsequently binds. Helps modulate mRNA selection, yielding the 30S pre-initiation complex (PIC). Upon addition of the 50S ribosomal subunit IF-1, IF-2 and IF-3 are released leaving the mature 70S translation initiation complex. This chain is Translation initiation factor IF-1, chloroplastic, found in Anthoceros angustus (Hornwort).